The chain runs to 85 residues: Hepcidin (85 aa).

The N-terminal stretch at 1 to 24 (MKTFSVAVAVAVVLAFICLQESSA) is a signal peptide. Residues 25–64 (VPVTEVQELEEPMSNEYQEMPVESWKMPYNNRHKRHSSPG) constitute a propeptide that is removed on maturation. 4 cysteine pairs are disulfide-bonded: C66-C83, C69-C72, C70-C79, and C73-C82.

In terms of tissue distribution, predominantly expressed in liver.

Its subcellular location is the secreted. In terms of biological role, seems to act as a signaling molecule involved in the maintenance of iron homeostasis. Seems to be required in conjunction with HFE to regulate both intestinal iron absorption and iron storage in macrophages. Its function is as follows. Antimicrobial activity against Gram-negative bacteria such as E.coli. This is Hepcidin (hamp) from Morone chrysops x Morone saxatilis (White bass x Striped bass).